The chain runs to 88 residues: Apolipoprotein C-I (88 aa).

Residues methionine 1–alanine 26 form the signal peptide.

It belongs to the apolipoprotein C1 family.

Its subcellular location is the secreted. Functionally, inhibitor of lipoprotein binding to the low density lipoprotein (LDL) receptor, LDL receptor-related protein, and very low density lipoprotein (VLDL) receptor. Associates with high density lipoproteins (HDL) and the triacylglycerol-rich lipoproteins in the plasma and makes up about 10% of the protein of the VLDL and 2% of that of HDL. Appears to interfere directly with fatty acid uptake and is also the major plasma inhibitor of cholesteryl ester transfer protein (CETP). Binds free fatty acids and reduces their intracellular esterification. Modulates the interaction of APOE with beta-migrating VLDL and inhibits binding of beta-VLDL to the LDL receptor-related protein. The protein is Apolipoprotein C-I (APOC1) of Cynopterus brachyotis (Lesser short-nosed fruit bat).